A 161-amino-acid polypeptide reads, in one-letter code: Phosphopantetheine adenylyltransferase (161 aa).

Thr-10 contributes to the substrate binding site. Residues 10 to 11 and His-18 each bind ATP; that span reads TF. Substrate contacts are provided by Lys-42, Leu-74, and Arg-88. Residues 89–91, Glu-99, and 124–130 contribute to the ATP site; these read GLR and NSFISST.

This sequence belongs to the bacterial CoaD family. In terms of assembly, homohexamer. Requires Mg(2+) as cofactor.

It is found in the cytoplasm. It carries out the reaction (R)-4'-phosphopantetheine + ATP + H(+) = 3'-dephospho-CoA + diphosphate. It participates in cofactor biosynthesis; coenzyme A biosynthesis; CoA from (R)-pantothenate: step 4/5. In terms of biological role, reversibly transfers an adenylyl group from ATP to 4'-phosphopantetheine, yielding dephospho-CoA (dPCoA) and pyrophosphate. The polypeptide is Phosphopantetheine adenylyltransferase (Photobacterium profundum (strain SS9)).